We begin with the raw amino-acid sequence, 259 residues long: UPF0246 protein VFMJ11_2214 (259 aa).

The protein belongs to the UPF0246 family.

This chain is UPF0246 protein VFMJ11_2214, found in Aliivibrio fischeri (strain MJ11) (Vibrio fischeri).